A 200-amino-acid chain; its full sequence is uncharacterized protein (200 aa).

This is an uncharacterized protein from Ureaplasma parvum serovar 3 (strain ATCC 700970).